Here is an 809-residue protein sequence, read N- to C-terminus: MASPAFSHFLPRFGVAAAVASALSLAGCQSWNTQDTLPPTSGVQPLKGLAQNVSVRRNAVGVPLIESSSFHDALFTLGYVHASDRIGQMVTLHLLAQGRLAEMSGADALEVDRLMRAINLKKSADELYKASSPRIKRFFEVYARGVNAYLFRYRDKLPPDLAAQGYTPEYWKAEDSALIFCLLNFGQSANLQEEINALVLAQKVGSDKLPWLTPSYPDEPLPLAEADKLKGLNLTVPGLNEVSRAINRLAQLNSLGTRGGSNLAIAPQRSRTGRSLLAADSHLQAWYYTQIRAPKYQAAGASIAGLPAILQGFNGKVAWSMSSVEGDNQDLFLEKLKRQGNALYYQNNGKWQPVTVRNETYFVKGQRPIREAVYETRHGPLLNSALGAALGNGFGLALQTPELKDDKTLDAFFDLSRAQNVEKASDASREIRAIALNMVFADASNIGWQVTGRFPNRREGEGLLPSPGWDGRYDWDGYADPMLHPYDQDPPQGWIATANQRVISQGYGMQLSNSWHAPERAERMAGLASSGKQDNRSLIALQYDQSTLFAAKLKKMFEAPGMAQPLKQAIEALPDTERAKAREAYSRLLAFDGKVSAGSADAALYELFLQESAKQIFLDKLGPESSDAWQAFVANGNLSYSAQADHLLGQEDSPFWDDSRTAQKEDKPAILARSLAAAISSGEQLLGADRKAWQWGKLHSYQWTNANGRQIRGPLQAGGDHNTINSAAYRWGQDFAITDTPALRLIVDFSLSEPLMGLNSSGQSGNPVSPNYANGIDGWLKAQYLSLPMQPQNFERSYGKTRLTLVPGK.

The signal sequence occupies residues 1 to 26 (MASPAFSHFLPRFGVAAAVASALSLA). Residue Ser-261 is the Nucleophile of the active site.

This sequence belongs to the peptidase S45 family. Heterodimer of an alpha subunit and a beta subunit processed from the same precursor.

It localises to the periplasm. The catalysed reaction is an N-acyl-L-homoserine lactone + H2O = L-homoserine lactone + a carboxylate. Functionally, catalyzes the deacylation of acyl-homoserine lactone (AHL or acyl-HSL), releasing homoserine lactone (HSL) and the corresponding fatty acid. Possesses a specificity for the degradation of long-chain acyl-HSLs (side chains of seven or more carbons in length). In Pseudomonas fluorescens (strain ATCC BAA-477 / NRRL B-23932 / Pf-5), this protein is Acyl-homoserine lactone acylase QuiP (quiP).